The primary structure comprises 310 residues: tRNA dimethylallyltransferase (310 aa).

Position 19–26 (19–26) interacts with ATP; sequence GPTGTGKS. 21–26 serves as a coordination point for substrate; it reads TGTGKS.

The protein belongs to the IPP transferase family. In terms of assembly, monomer. The cofactor is Mg(2+).

It carries out the reaction adenosine(37) in tRNA + dimethylallyl diphosphate = N(6)-dimethylallyladenosine(37) in tRNA + diphosphate. In terms of biological role, catalyzes the transfer of a dimethylallyl group onto the adenine at position 37 in tRNAs that read codons beginning with uridine, leading to the formation of N6-(dimethylallyl)adenosine (i(6)A). This Saccharopolyspora erythraea (strain ATCC 11635 / DSM 40517 / JCM 4748 / NBRC 13426 / NCIMB 8594 / NRRL 2338) protein is tRNA dimethylallyltransferase.